The sequence spans 87 residues: MTILKNQINKGIIFLIRCYQKYISPMFPPTCRYYPTCSNYAIDAIKKHGIVKGIIMGIFRILRCNPFVEGGVDVVPEKFTIFRNDDK.

It belongs to the UPF0161 family.

It is found in the cell membrane. Could be involved in insertion of integral membrane proteins into the membrane. This is Putative membrane protein insertion efficiency factor from Ligilactobacillus salivarius (strain UCC118) (Lactobacillus salivarius).